Reading from the N-terminus, the 212-residue chain is Vesicle transport protein SFT2C (212 aa).

The Cytoplasmic segment spans residues 1-78; that stretch reads MADLHRQLQD…TRGQRLVAGG (78 aa). A helical membrane pass occupies residues 79–99; that stretch reads LCLLLAALCFGLAALYAPVLL. Topologically, residues 100-104 are lumenal; it reads LRARK. A helical transmembrane segment spans residues 105-125; that stretch reads FALLWSLGSVLAWASAALLRG. At 126–142 the chain is on the cytoplasmic side; that stretch reads GPACGRLLRGEETPSRS. A helical membrane pass occupies residues 143-165; the sequence is TLGYAAALGATLYAALVLRSTVL. At 166–174 the chain is on the lumenal side; it reads TALGACAQV. The chain crosses the membrane as a helical span at residues 175 to 197; that stretch reads AALLYALIGLLPWGGVTALRLAL. Topologically, residues 198–212 are cytoplasmic; it reads GRLNRGTGLANALPV.

It belongs to the SFT2 family.

It is found in the membrane. Its function is as follows. May be involved in fusion of retrograde transport vesicles derived from an endocytic compartment with the Golgi complex. The polypeptide is Vesicle transport protein SFT2C (Mus musculus (Mouse)).